We begin with the raw amino-acid sequence, 406 residues long: Argininosuccinate synthase (406 aa).

ATP contacts are provided by residues 11 to 19 and Ala38; that span reads AYSGGLDTS. The L-citrulline site is built by Tyr91 and Ser96. Position 121 (Gly121) interacts with ATP. The L-aspartate site is built by Thr123, Asn127, and Asp128. Residue Asn127 participates in L-citrulline binding. Arg131, Ser181, Ser190, Glu266, and Tyr278 together coordinate L-citrulline.

The protein belongs to the argininosuccinate synthase family. Type 1 subfamily. In terms of assembly, homotetramer.

The protein resides in the cytoplasm. The catalysed reaction is L-citrulline + L-aspartate + ATP = 2-(N(omega)-L-arginino)succinate + AMP + diphosphate + H(+). It functions in the pathway amino-acid biosynthesis; L-arginine biosynthesis; L-arginine from L-ornithine and carbamoyl phosphate: step 2/3. This is Argininosuccinate synthase from Campylobacter lari (strain RM2100 / D67 / ATCC BAA-1060).